The chain runs to 158 residues: 2-C-methyl-D-erythritol 2,4-cyclodiphosphate synthase (158 aa).

Residues Asp8 and His10 each contribute to the a divalent metal cation site. 4-CDP-2-C-methyl-D-erythritol 2-phosphate is bound by residues 8–10 (DSH) and 34–35 (HS). Residue His42 participates in a divalent metal cation binding. 4-CDP-2-C-methyl-D-erythritol 2-phosphate is bound by residues 56–58 (DIG), 61–65 (FPDND), and Arg142.

Belongs to the IspF family. Homotrimer. A divalent metal cation is required as a cofactor.

It catalyses the reaction 4-CDP-2-C-methyl-D-erythritol 2-phosphate = 2-C-methyl-D-erythritol 2,4-cyclic diphosphate + CMP. The protein operates within isoprenoid biosynthesis; isopentenyl diphosphate biosynthesis via DXP pathway; isopentenyl diphosphate from 1-deoxy-D-xylulose 5-phosphate: step 4/6. In terms of biological role, involved in the biosynthesis of isopentenyl diphosphate (IPP) and dimethylallyl diphosphate (DMAPP), two major building blocks of isoprenoid compounds. Catalyzes the conversion of 4-diphosphocytidyl-2-C-methyl-D-erythritol 2-phosphate (CDP-ME2P) to 2-C-methyl-D-erythritol 2,4-cyclodiphosphate (ME-CPP) with a corresponding release of cytidine 5-monophosphate (CMP). This chain is 2-C-methyl-D-erythritol 2,4-cyclodiphosphate synthase, found in Brachyspira hyodysenteriae (strain ATCC 49526 / WA1).